The chain runs to 110 residues: Protein NATD1 (110 aa).

The N-acetyltransferase domain occupies E19–L109.

It belongs to the NATD1 family.

This Danio rerio (Zebrafish) protein is Protein NATD1 (natd1).